Reading from the N-terminus, the 53-residue chain is VTSYTLSDVVPLKDVVPEWVRIGFSATPGAEYAAHEVLSWSFHSELSGTSSKQ.

Belongs to the leguminous lectin family. Heterodimer of an alpha and a beta chain.

In terms of biological role, this lectin specifically binds mannose and glucose. This is Mannose/glucose-specific lectin alpha chain from Vicia cracca (Bird vetch).